A 118-amino-acid polypeptide reads, in one-letter code: Large ribosomal subunit protein bL17 (118 aa).

Belongs to the bacterial ribosomal protein bL17 family. In terms of assembly, part of the 50S ribosomal subunit. Contacts protein L32.

The sequence is that of Large ribosomal subunit protein bL17 from Phytoplasma mali (strain AT).